A 191-amino-acid chain; its full sequence is Small ribosomal subunit protein uS5 (191 aa).

The region spanning 21–84 (LVDKLVTINR…ERAKRTMIRV (64 aa)) is the S5 DRBM domain. The interval 161–191 (PRHVASRRGKKAAELFGKREQGQTEAEVTNG) is disordered. The span at 171–182 (KAAELFGKREQG) shows a compositional bias: basic and acidic residues.

It belongs to the universal ribosomal protein uS5 family. Part of the 30S ribosomal subunit. Contacts proteins S4 and S8.

In terms of biological role, with S4 and S12 plays an important role in translational accuracy. Functionally, located at the back of the 30S subunit body where it stabilizes the conformation of the head with respect to the body. The polypeptide is Small ribosomal subunit protein uS5 (Gluconobacter oxydans (strain 621H) (Gluconobacter suboxydans)).